The sequence spans 557 residues: Intraflagellar transport protein 56 (557 aa).

The tract at residues 1 to 30 is disordered; it reads MLLSRMKPAVGGEASTSSNEKKRKNKSKKI. Basic residues predominate over residues 21–30; it reads KKRKNKSKKI. TPR repeat units follow at residues 60 to 93, 95 to 128, 154 to 187, and 471 to 504; these read EHADLWTGFCAFHVGDHKRAMEEYKALTLRPDCP, DVWVYLGCALFFLGLYKEAEEAALKGSKTQLQNR, TEDQLSLASIHYMRSHYQEAIDIYKRILLQNREF, and ANDCYKMGQFYYAAKAFDALERLDPNPEYWEGKR.

Belongs to the IFT56 family. Component of the IFT complex B.

It is found in the cell projection. The protein localises to the cilium. Its function is as follows. Component of the intraflagellar transport (IFT) complex B required for transport of proteins in the motile cilium. Required for transport of specific ciliary cargo proteins related to motility, while it is neither required for IFT complex B assembly or motion nor for cilium assembly. Plays a key role in maintaining the integrity of the IFT complex B and the proper ciliary localization of the IFT complex B components. Essential for maintaining proper microtubule organization within the ciliary axoneme. The sequence is that of Intraflagellar transport protein 56 from Danio rerio (Zebrafish).